The primary structure comprises 102 residues: Iron-sulfur cluster assembly protein CyaY (102 aa).

It belongs to the frataxin family.

In terms of biological role, involved in iron-sulfur (Fe-S) cluster assembly. May act as a regulator of Fe-S biogenesis. The chain is Iron-sulfur cluster assembly protein CyaY from Pasteurella multocida (strain Pm70).